The sequence spans 464 residues: ATP synthase subunit beta 2 (464 aa).

147 to 154 (GGAGVGKT) is an ATP binding site.

It belongs to the ATPase alpha/beta chains family. As to quaternary structure, F-type ATPases have 2 components, CF(1) - the catalytic core - and CF(0) - the membrane proton channel. CF(1) has five subunits: alpha(3), beta(3), gamma(1), delta(1), epsilon(1). CF(0) has four main subunits: a(1), b(1), b'(1) and c(9-12).

It is found in the cell inner membrane. The enzyme catalyses ATP + H2O + 4 H(+)(in) = ADP + phosphate + 5 H(+)(out). Its function is as follows. Produces ATP from ADP in the presence of a proton gradient across the membrane. The catalytic sites are hosted primarily by the beta subunits. This chain is ATP synthase subunit beta 2, found in Cereibacter sphaeroides (strain ATCC 17029 / ATH 2.4.9) (Rhodobacter sphaeroides).